Consider the following 266-residue polypeptide: GFP-like fluorescent chromoprotein cFP484 (266 aa).

Residues 104–106 (QYG) constitute a cross-link (2-iminomethyl-5-imidazolinone (Gln-Gly)). Tyr105 is modified (2,3-didehydrotyrosine).

The protein belongs to the GFP family. Contains a chromophore consisting of modified amino acid residues. The chromophore is formed by autocatalytic backbone condensation between Xaa-N and Gly-(N+2), oxidation of Tyr-(N+1) to didehydrotyrosine, and formation of a double bond to the alpha-amino nitrogen of residue Xaa-N. Maturation of the chromophore requires nothing other than molecular oxygen. The precise stereochemistry of the tyrosine has not been determined. In terms of tissue distribution, tentacle and oral disk.

Its function is as follows. Pigment protein that is green in color. This is GFP-like fluorescent chromoprotein cFP484 from Clavularia sp. (Brown star polyp).